A 532-amino-acid polypeptide reads, in one-letter code: BEL1-like homeodomain protein 6 (532 aa).

The interval 144–160 (SKYLKAAQQLLDEAVNV) is SR/KY domain. The segment at 170–203 (EGDKNNENPQEPNQSTQDSSTNPPADISQSERQE) is disordered. Residues 176–197 (ENPQEPNQSTQDSSTNPPADIS) are compositionally biased toward polar residues. Residues 200 to 271 (ERQEMQSKLT…SLRDAISGQI (72 aa)) form a BELL domain region. A DNA-binding region (homeobox) is located at residues 314–376 (AWRPQRGLPE…NARVRLWKPM (63 aa)). Residues 385-434 (FTENDSNSSSENTPKMSEIGPVAADDEDRAREFSQDQTKPDHGHGYGEET) form a disordered region. Over residues 412 to 434 (DRAREFSQDQTKPDHGHGYGEET) the composition is skewed to basic and acidic residues.

The protein belongs to the TALE/BELL homeobox family. In terms of assembly, may form heterodimeric complexes with TALE/KNOX proteins. Interacts with OFP2, OFP4, and OFP5.

Its subcellular location is the nucleus. This chain is BEL1-like homeodomain protein 6 (BLH6), found in Arabidopsis thaliana (Mouse-ear cress).